The sequence spans 118 residues: Basic phospholipase A2 PA-10A (118 aa).

7 cysteine pairs are disulfide-bonded: C11–C71, C27–C117, C29–C45, C44–C98, C51–C91, C60–C84, and C78–C89. The Ca(2+) site is built by Y28, G30, and G32. H48 is a catalytic residue. Residue D49 coordinates Ca(2+). D92 is an active-site residue.

It belongs to the phospholipase A2 family. Group I subfamily. D49 sub-subfamily. It depends on Ca(2+) as a cofactor. Expressed by the venom gland.

Its subcellular location is the secreted. The enzyme catalyses a 1,2-diacyl-sn-glycero-3-phosphocholine + H2O = a 1-acyl-sn-glycero-3-phosphocholine + a fatty acid + H(+). Functionally, PLA2 catalyzes the calcium-dependent hydrolysis of the 2-acyl groups in 3-sn-phosphoglycerides. This chain is Basic phospholipase A2 PA-10A, found in Pseudechis australis (Mulga snake).